Reading from the N-terminus, the 209-residue chain is Chaperone protein TorD (209 aa).

It belongs to the TorD/DmsD family. TorD subfamily.

The protein localises to the cytoplasm. Its function is as follows. Involved in the biogenesis of TorA. Acts on TorA before the insertion of the molybdenum cofactor and, as a result, probably favors a conformation of the apoenzyme that is competent for acquiring the cofactor. This chain is Chaperone protein TorD, found in Shewanella baltica (strain OS185).